We begin with the raw amino-acid sequence, 870 residues long: DNA-directed RNA polymerase subunit Rpo1N (870 aa).

The Zn(2+) site is built by Cys60, Cys63, Cys70, His73, Cys100, Cys103, Cys146, and Cys149. Residues Asp451, Asp453, and Asp455 each contribute to the Mg(2+) site.

The protein belongs to the RNA polymerase beta' chain family. Part of the RNA polymerase complex. It depends on Mg(2+) as a cofactor. The cofactor is Zn(2+).

The protein localises to the cytoplasm. The enzyme catalyses RNA(n) + a ribonucleoside 5'-triphosphate = RNA(n+1) + diphosphate. Functionally, DNA-dependent RNA polymerase (RNAP) catalyzes the transcription of DNA into RNA using the four ribonucleoside triphosphates as substrates. Forms the clamp head domain. The protein is DNA-directed RNA polymerase subunit Rpo1N of Methanothermobacter thermautotrophicus (strain ATCC 29096 / DSM 1053 / JCM 10044 / NBRC 100330 / Delta H) (Methanobacterium thermoautotrophicum).